The chain runs to 53 residues: Sec-independent protein translocase protein TatA (53 aa).

The chain crosses the membrane as a helical span at residues 1–21 (MGMSLSHLLIVLLIIFVLFGA).

It belongs to the TatA/E family. In terms of assembly, the Tat system comprises two distinct complexes: a TatABC complex, containing multiple copies of TatA, TatB and TatC subunits, and a separate TatA complex, containing only TatA subunits. Substrates initially bind to the TatABC complex, which probably triggers association of the separate TatA complex to form the active translocon.

Its subcellular location is the cell inner membrane. In terms of biological role, part of the twin-arginine translocation (Tat) system that transports large folded proteins containing a characteristic twin-arginine motif in their signal peptide across membranes. TatA could form the protein-conducting channel of the Tat system. The sequence is that of Sec-independent protein translocase protein TatA from Rickettsia conorii (strain ATCC VR-613 / Malish 7).